The primary structure comprises 391 residues: Adhesion defective protein 1 (391 aa).

Residues 180–190 (SQSRPPQNQIQ) are compositionally biased toward polar residues. Disordered regions lie at residues 180 to 217 (SQSRPPQNQIQHDGVKSEDPSSESVNINSSSSLLPDSP) and 366 to 391 (VEGENPNNNPNFYSSDMLNAQKRTKV). Residues 201-211 (SESVNINSSSS) are compositionally biased toward low complexity. The segment covering 370 to 383 (NPNNNPNFYSSDML) has biased composition (polar residues).

Belongs to the adn1/SEU family.

Its subcellular location is the nucleus. Functionally, probable transcriptional regulator involved in cell adhesion. The chain is Adhesion defective protein 1 (adn1) from Schizosaccharomyces pombe (strain 972 / ATCC 24843) (Fission yeast).